Here is a 710-residue protein sequence, read N- to C-terminus: Serine/threonine-protein phosphatase PP-Z2 (710 aa).

The tract at residues 1–382 (MGNSGSKQHT…ADGDNGSRTN (382 aa)) is disordered. Gly-2 carries the N-myristoyl glycine lipid modification. Basic and acidic residues predominate over residues 15-27 (KKDDHDGDRKKTL). Residues 40-49 (SLKSSRSLRS) show a composition bias toward low complexity. A phosphoserine mark is found at Ser-55 and Ser-71. Composition is skewed to polar residues over residues 62 to 77 (NVQAQTQPLSRRSSTL) and 95 to 104 (PNNHYLTSHP). Low complexity-rich tracts occupy residues 105 to 125 (SSSRRLSSSSRRSSMGNNNNS) and 143 to 155 (NSTSMHSTSSFNS). Acidic residues predominate over residues 160 to 172 (LTDDDDDRGDDGG). Thr-161 bears the Phosphothreonine mark. Ser-203 and Ser-224 each carry phosphoserine. Low complexity predominate over residues 247–260 (SNRSNSHASSRKSS). The segment covering 261–273 (FGSTGNTAYSTPL) has biased composition (polar residues). At Thr-271 the chain carries Phosphothreonine. Ser-275 carries the post-translational modification Phosphoserine. The span at 291-302 (DNVNGRGTSPIP) shows a compositional bias: polar residues. Residue Ser-310 is modified to Phosphoserine. Positions 454, 456, 482, and 514 each coordinate Mn(2+). His-515 acts as the Proton donor in catalysis. Mn(2+) contacts are provided by His-563 and His-638.

This sequence belongs to the PPP phosphatase family. PP-Z subfamily. The cofactor is Mn(2+).

The catalysed reaction is O-phospho-L-seryl-[protein] + H2O = L-seryl-[protein] + phosphate. It catalyses the reaction O-phospho-L-threonyl-[protein] + H2O = L-threonyl-[protein] + phosphate. Essential for the maintenance of cell size and integrity in response to osmotic stress. This is Serine/threonine-protein phosphatase PP-Z2 (PPZ2) from Saccharomyces cerevisiae (strain ATCC 204508 / S288c) (Baker's yeast).